The primary structure comprises 161 residues: S-ribosylhomocysteine lyase (161 aa).

Fe cation contacts are provided by histidine 53, histidine 57, and cysteine 124.

It belongs to the LuxS family. As to quaternary structure, homodimer. It depends on Fe cation as a cofactor.

The catalysed reaction is S-(5-deoxy-D-ribos-5-yl)-L-homocysteine = (S)-4,5-dihydroxypentane-2,3-dione + L-homocysteine. Its function is as follows. Involved in the synthesis of autoinducer 2 (AI-2) which is secreted by bacteria and is used to communicate both the cell density and the metabolic potential of the environment. The regulation of gene expression in response to changes in cell density is called quorum sensing. Catalyzes the transformation of S-ribosylhomocysteine (RHC) to homocysteine (HC) and 4,5-dihydroxy-2,3-pentadione (DPD). This Phocaeicola vulgatus (strain ATCC 8482 / DSM 1447 / JCM 5826 / CCUG 4940 / NBRC 14291 / NCTC 11154) (Bacteroides vulgatus) protein is S-ribosylhomocysteine lyase.